The following is a 100-amino-acid chain: Urease subunit gamma (100 aa).

It belongs to the urease gamma subunit family. As to quaternary structure, heterotrimer of UreA (gamma), UreB (beta) and UreC (alpha) subunits. Three heterotrimers associate to form the active enzyme.

Its subcellular location is the cytoplasm. It catalyses the reaction urea + 2 H2O + H(+) = hydrogencarbonate + 2 NH4(+). It participates in nitrogen metabolism; urea degradation; CO(2) and NH(3) from urea (urease route): step 1/1. In Mycobacteroides abscessus (strain ATCC 19977 / DSM 44196 / CCUG 20993 / CIP 104536 / JCM 13569 / NCTC 13031 / TMC 1543 / L948) (Mycobacterium abscessus), this protein is Urease subunit gamma.